An 85-amino-acid polypeptide reads, in one-letter code: Sec-independent protein translocase protein TatA (85 aa).

Residues 1-21 traverse the membrane as a helical segment; it reads MGGISIWQLLIIALIVVLLFG. Positions 43 to 85 are disordered; it reads MSSDEDKKALEDAEAAKSVQTAQTAQPTQQATEKKPESNKEQA. Positions 46–57 are enriched in basic and acidic residues; that stretch reads DEDKKALEDAEA. Low complexity predominate over residues 58 to 73; sequence AKSVQTAQTAQPTQQA. Over residues 74–85 the composition is skewed to basic and acidic residues; that stretch reads TEKKPESNKEQA.

This sequence belongs to the TatA/E family. The Tat system comprises two distinct complexes: a TatABC complex, containing multiple copies of TatA, TatB and TatC subunits, and a separate TatA complex, containing only TatA subunits. Substrates initially bind to the TatABC complex, which probably triggers association of the separate TatA complex to form the active translocon.

It is found in the cell inner membrane. Part of the twin-arginine translocation (Tat) system that transports large folded proteins containing a characteristic twin-arginine motif in their signal peptide across membranes. TatA could form the protein-conducting channel of the Tat system. The protein is Sec-independent protein translocase protein TatA of Shewanella sp. (strain ANA-3).